We begin with the raw amino-acid sequence, 435 residues long: Serine--tRNA ligase (435 aa).

237–239 (TAE) contributes to the L-serine binding site. 268–270 (RSE) lines the ATP pocket. Glu291 is an L-serine binding site. Position 355 to 358 (355 to 358 (EISS)) interacts with ATP. Ser390 is an L-serine binding site.

It belongs to the class-II aminoacyl-tRNA synthetase family. Type-1 seryl-tRNA synthetase subfamily. In terms of assembly, homodimer. The tRNA molecule binds across the dimer.

Its subcellular location is the cytoplasm. It catalyses the reaction tRNA(Ser) + L-serine + ATP = L-seryl-tRNA(Ser) + AMP + diphosphate + H(+). The enzyme catalyses tRNA(Sec) + L-serine + ATP = L-seryl-tRNA(Sec) + AMP + diphosphate + H(+). The protein operates within aminoacyl-tRNA biosynthesis; selenocysteinyl-tRNA(Sec) biosynthesis; L-seryl-tRNA(Sec) from L-serine and tRNA(Sec): step 1/1. Functionally, catalyzes the attachment of serine to tRNA(Ser). Is also able to aminoacylate tRNA(Sec) with serine, to form the misacylated tRNA L-seryl-tRNA(Sec), which will be further converted into selenocysteinyl-tRNA(Sec). The sequence is that of Serine--tRNA ligase from Lactobacillus acidophilus (strain ATCC 700396 / NCK56 / N2 / NCFM).